The following is a 164-amino-acid chain: Phosphopantetheine adenylyltransferase (164 aa).

Residue S11 coordinates substrate. Residues 11–12 and H19 contribute to the ATP site; that span reads SF. Residues K43, A76, and R90 each contribute to the substrate site. Residues 91-93, E101, and 126-132 each bind ATP; these read GLR and YQHISSS.

This sequence belongs to the bacterial CoaD family. In terms of assembly, homohexamer. It depends on Mg(2+) as a cofactor.

It is found in the cytoplasm. It carries out the reaction (R)-4'-phosphopantetheine + ATP + H(+) = 3'-dephospho-CoA + diphosphate. The protein operates within cofactor biosynthesis; coenzyme A biosynthesis; CoA from (R)-pantothenate: step 4/5. Reversibly transfers an adenylyl group from ATP to 4'-phosphopantetheine, yielding dephospho-CoA (dPCoA) and pyrophosphate. This Streptococcus sanguinis (strain SK36) protein is Phosphopantetheine adenylyltransferase.